The following is a 290-amino-acid chain: Endoplasmic reticulum-Golgi intermediate compartment protein 1 (290 aa).

The Cytoplasmic segment spans residues 1–26 (MPFDFRRFDIYRKVPKDLTQPTYTGA). Residues 27–47 (IISICCCLFILFLFLSELTGF) traverse the membrane as a helical segment. The Lumenal segment spans residues 48–254 (ITTEVVNELY…RRQPLYRFIT (207 aa)). N-linked (GlcNAc...) asparagine glycosylation is present at Asn-74. The chain crosses the membrane as a helical span at residues 255–275 (TICAIIGGTFTVAGILDSCIF). Over 276–290 (TASEAWKKIQLGKIH) the chain is Cytoplasmic.

It belongs to the ERGIC family. May form a heteromeric complex composed of ERGIC1, ERGIC2 and ERGIC3. Within the complex, the interaction with ERGIC3 is direct. Interacts with ERGIC3/ERV46. Post-translationally, N-glycosylated.

It localises to the endoplasmic reticulum membrane. Its subcellular location is the endoplasmic reticulum-Golgi intermediate compartment membrane. The protein localises to the golgi apparatus membrane. In terms of biological role, possible role in transport between endoplasmic reticulum and Golgi. The chain is Endoplasmic reticulum-Golgi intermediate compartment protein 1 (Ergic1) from Mus musculus (Mouse).